A 123-amino-acid chain; its full sequence is Large ribosomal subunit protein bL20 (123 aa).

It belongs to the bacterial ribosomal protein bL20 family.

Functionally, binds directly to 23S ribosomal RNA and is necessary for the in vitro assembly process of the 50S ribosomal subunit. It is not involved in the protein synthesizing functions of that subunit. This chain is Large ribosomal subunit protein bL20, found in Pseudothermotoga lettingae (strain ATCC BAA-301 / DSM 14385 / NBRC 107922 / TMO) (Thermotoga lettingae).